We begin with the raw amino-acid sequence, 198 residues long: Large ribosomal subunit protein bL27c (198 aa).

A chloroplast-targeting transit peptide spans 1–58 (MAMATSMSLNLIGAFKGLSLSSTSSFLRGDLSFSPKTSFTVTLPLENLQAPIPLTIES).

Belongs to the bacterial ribosomal protein bL27 family. As to quaternary structure, part of the 50S ribosomal subunit.

It localises to the plastid. Its subcellular location is the chloroplast. The protein is Large ribosomal subunit protein bL27c (RPL27) of Arabidopsis thaliana (Mouse-ear cress).